Reading from the N-terminus, the 201-residue chain is Translation initiation factor IF-3 (201 aa).

A disordered region spans residues 170–201 (TPKSASKKGHTPPKTQVEASKQANESAETEEE). A compositionally biased stretch (polar residues) spans 182–195 (PKTQVEASKQANES).

This sequence belongs to the IF-3 family. Monomer.

The protein resides in the cytoplasm. Its function is as follows. IF-3 binds to the 30S ribosomal subunit and shifts the equilibrium between 70S ribosomes and their 50S and 30S subunits in favor of the free subunits, thus enhancing the availability of 30S subunits on which protein synthesis initiation begins. This is Translation initiation factor IF-3 from Porphyromonas gingivalis (strain ATCC BAA-308 / W83).